The chain runs to 1428 residues: DNA polymerase III PolC-type (1428 aa).

One can recognise an Exonuclease domain in the interval 414–570 (FVVFDVETTG…YDAEATGYLL (157 aa)).

The protein belongs to the DNA polymerase type-C family. PolC subfamily.

The protein resides in the cytoplasm. It catalyses the reaction DNA(n) + a 2'-deoxyribonucleoside 5'-triphosphate = DNA(n+1) + diphosphate. Required for replicative DNA synthesis. This DNA polymerase also exhibits 3' to 5' exonuclease activity. This Oceanobacillus iheyensis (strain DSM 14371 / CIP 107618 / JCM 11309 / KCTC 3954 / HTE831) protein is DNA polymerase III PolC-type.